Reading from the N-terminus, the 271-residue chain is MQYWGKIIGVAVALLMGGGFWGVVLGLLIGHMFDKARSRKMAWFANQRERQALFFATTFEVMGHLTKSKGRVTEADIHIASQLMDRMNLHGASRTAAQNAFRVGKSDNYPLREKMRQFRSVCFGRFDLIRMFLEIQIQAAFADGSLHPNERAVLYVIAEELGISRAQFDQFLRMMQGGAQFGGGYQQQTGGGNWQQAQRGPTLEDACNVLGVKPTDDATTIKRAYRKLMSEHHPDKLVAKGLPPEMMEMAKQKAQEIQQAYELIKQQKGFK.

Over 1-6 (MQYWGK) the chain is Periplasmic. Residues 7–31 (IIGVAVALLMGGGFWGVVLGLLIGH) form a helical membrane-spanning segment. Topologically, residues 32 to 271 (MFDKARSRKM…ELIKQQKGFK (240 aa)) are cytoplasmic. The region spanning 205–271 (DACNVLGVKP…ELIKQQKGFK (67 aa)) is the J domain.

Homodimer.

It is found in the cell inner membrane. Regulatory DnaK co-chaperone. Direct interaction between DnaK and DjlA is needed for the induction of the wcaABCDE operon, involved in the synthesis of a colanic acid polysaccharide capsule, possibly through activation of the RcsB/RcsC phosphotransfer signaling pathway. The colanic acid capsule may help the bacterium survive conditions outside the host. This chain is Co-chaperone protein DjlA, found in Escherichia coli (strain K12).